The primary structure comprises 729 residues: DNA topoisomerase 3 (729 aa).

The region spanning 3–136 (KSVVIAEKPS…IKRLWISSVT (134 aa)) is the Toprim domain. The Mg(2+) site is built by glutamate 9 and aspartate 105. A Topo IA-type catalytic domain is found at 153–594 (YDNLYASAVA…EMKNYTKEIV (442 aa)). The interaction with DNA stretch occupies residues 187–192 (NCGRVQ). Tyrosine 310 functions as the O-(5'-phospho-DNA)-tyrosine intermediate in the catalytic mechanism. A compositionally biased stretch (basic and acidic residues) spans 686–713 (ERRKKESGNKADKRDVQKYMKQQKKEEE). Residues 686–718 (ERRKKESGNKADKRDVQKYMKQQKKEEEPLNNP) form a disordered region.

The protein belongs to the type IA topoisomerase family. The cofactor is Mg(2+).

It catalyses the reaction ATP-independent breakage of single-stranded DNA, followed by passage and rejoining.. Its function is as follows. Releases the supercoiling and torsional tension of DNA, which is introduced during the DNA replication and transcription, by transiently cleaving and rejoining one strand of the DNA duplex. Introduces a single-strand break via transesterification at a target site in duplex DNA. The scissile phosphodiester is attacked by the catalytic tyrosine of the enzyme, resulting in the formation of a DNA-(5'-phosphotyrosyl)-enzyme intermediate and the expulsion of a 3'-OH DNA strand. The free DNA strand then undergoes passage around the unbroken strand, thus removing DNA supercoils. Finally, in the religation step, the DNA 3'-OH attacks the covalent intermediate to expel the active-site tyrosine and restore the DNA phosphodiester backbone. The sequence is that of DNA topoisomerase 3 from Bacillus thuringiensis subsp. konkukian (strain 97-27).